A 614-amino-acid chain; its full sequence is UvrABC system protein C (614 aa).

In terms of domain architecture, GIY-YIG spans 20–98 (TAPGVYRMYA…IKSLSPRYNV (79 aa)). The 36-residue stretch at 207 to 242 (DELTRELGEQMQAASEALEFEQAARLRDLISSLRSM) folds into the UVR domain.

Belongs to the UvrC family. Interacts with UvrB in an incision complex.

It localises to the cytoplasm. Functionally, the UvrABC repair system catalyzes the recognition and processing of DNA lesions. UvrC both incises the 5' and 3' sides of the lesion. The N-terminal half is responsible for the 3' incision and the C-terminal half is responsible for the 5' incision. The polypeptide is UvrABC system protein C (Stenotrophomonas maltophilia (strain K279a)).